Consider the following 92-residue polypeptide: Small ribosomal subunit protein uS19 (92 aa).

This sequence belongs to the universal ribosomal protein uS19 family.

In terms of biological role, protein S19 forms a complex with S13 that binds strongly to the 16S ribosomal RNA. This Geobacillus stearothermophilus (Bacillus stearothermophilus) protein is Small ribosomal subunit protein uS19 (rpsS).